The following is a 379-amino-acid chain: MNKRITRPTWAEIDLSCLQFNFNQVKEILGSNVKIMSVVKADAYGHGVIPVAKTLVEAGTQRLAVAIPEEGVELREAGLSVPIQVLGEVLPSQYELLFKYDLIPTVGREETALSLNRLAAKYNVVKKVHIKVDTGMGRIGVRPREAVGFVKKVNSLSNIKIEGLMTHFASADERDKSYTYEQWDKFKQVLDGLNKLRIDIPIKHSSNSAAIIDFKKFGLDMVRPGIMLYGLKPSRDLINNIDLKPVLTWKTRIVYLKEVPPGTGISYGTTYVTNRKSKIATLPVGYADGYPRILSNQGQVLVRGRKAPIRGRVCMDQIMIDVTEIPDVRVGDEVVLIGEQGTQKISATDIAEKADTINYEIVCGISQRVPREYKNKIGG.

Residue K40 is the Proton acceptor; specific for D-alanine of the active site. K40 carries the post-translational modification N6-(pyridoxal phosphate)lysine. R138 is a binding site for substrate. The active-site Proton acceptor; specific for L-alanine is Y267. M315 contributes to the substrate binding site.

This sequence belongs to the alanine racemase family. Pyridoxal 5'-phosphate is required as a cofactor.

The enzyme catalyses L-alanine = D-alanine. It functions in the pathway amino-acid biosynthesis; D-alanine biosynthesis; D-alanine from L-alanine: step 1/1. Functionally, catalyzes the interconversion of L-alanine and D-alanine. May also act on other amino acids. The polypeptide is Alanine racemase (alr) (Halothermothrix orenii (strain H 168 / OCM 544 / DSM 9562)).